A 173-amino-acid polypeptide reads, in one-letter code: NADH-ubiquinone oxidoreductase chain 6 (173 aa).

Transmembrane regions (helical) follow at residues 1–21 (MTYVMSLFLLGLVLGLVAVAS), 25–45 (PYFGALSLVGVAAFGCGVLIW), 53–73 (LVLFLIYLGGMLVVFAYSAAL), 82–102 (LGSWPVVSVYFGYFFFVFGIL), and 142–162 (GVLLLGAWVLLLTLLVVLELV).

Belongs to the complex I subunit 6 family.

It localises to the mitochondrion membrane. It carries out the reaction a ubiquinone + NADH + 5 H(+)(in) = a ubiquinol + NAD(+) + 4 H(+)(out). Its function is as follows. Core subunit of the mitochondrial membrane respiratory chain NADH dehydrogenase (Complex I) that is believed to belong to the minimal assembly required for catalysis. Complex I functions in the transfer of electrons from NADH to the respiratory chain. The immediate electron acceptor for the enzyme is believed to be ubiquinone. This is NADH-ubiquinone oxidoreductase chain 6 (MT-ND6) from Tetraodon nigroviridis (Spotted green pufferfish).